The primary structure comprises 363 residues: Cytochrome c oxidase subunit 2 (363 aa).

Residues 1–23 (MTPRGPGRLQRLSQCRPQRGSGG) form a disordered region. Positions 1–41 (MTPRGPGRLQRLSQCRPQRGSGGPARGLRQLALAAMLGALA) are cleaved as a signal peptide. The next 2 helical transmembrane spans lie at 71 to 91 (LWIGAVIASLAVGVIVWGLIF) and 118 to 138 (LVLTVIPFLIISVLFYFTVVV). Residues H254, C295, C299, and H303 each coordinate Cu cation.

Belongs to the cytochrome c oxidase subunit 2 family. Cu cation serves as cofactor. It depends on heme as a cofactor.

The protein localises to the cell membrane. The catalysed reaction is 4 Fe(II)-[cytochrome c] + O2 + 8 H(+)(in) = 4 Fe(III)-[cytochrome c] + 2 H2O + 4 H(+)(out). Subunits I and II form the functional core of the enzyme complex. Electrons originating in cytochrome c are transferred via heme a and Cu(A) to the binuclear center formed by heme a3 and Cu(B). This chain is Cytochrome c oxidase subunit 2 (ctaC), found in Mycobacterium bovis (strain ATCC BAA-935 / AF2122/97).